The primary structure comprises 330 residues: MLHPALALVPGEPAGVGPELCVRLVQQPRQDCRLVAFADPATLQAAAAALDLPLRLLPPEALAERPGDLPIQAQCHVHPTRFGHPDPANAPAVIAALCEAASDCVHGALHGIVTGPVHKAVINQSGIHYTGTTELLAAQAECDVVMMLANPHLRVALVTTHLPLRDVPDVITAALLERCLRIVNTAMCGDFGIATPRIAVLGLNPHAGEGGYLGREELDVVIPVLQRLRAEGMVLLGPLSADTAFLPTKLIGYDAVVAMYHDQGLPVLKHSGFEQAVNITLGLPYPRVAVDHGTALDLAGRGVADPSSLFAATALCARLAVSRALLSVRS.

Threonine 133 lines the substrate pocket. The a divalent metal cation site is built by histidine 161, histidine 206, and histidine 261. Residues lysine 269, asparagine 278, and arginine 287 each contribute to the substrate site.

The protein belongs to the PdxA family. In terms of assembly, homodimer. The cofactor is Zn(2+). Mg(2+) serves as cofactor. It depends on Co(2+) as a cofactor.

The protein resides in the cytoplasm. It catalyses the reaction 4-(phosphooxy)-L-threonine + NAD(+) = 3-amino-2-oxopropyl phosphate + CO2 + NADH. Its pathway is cofactor biosynthesis; pyridoxine 5'-phosphate biosynthesis; pyridoxine 5'-phosphate from D-erythrose 4-phosphate: step 4/5. In terms of biological role, catalyzes the NAD(P)-dependent oxidation of 4-(phosphooxy)-L-threonine (HTP) into 2-amino-3-oxo-4-(phosphooxy)butyric acid which spontaneously decarboxylates to form 3-amino-2-oxopropyl phosphate (AHAP). In Xylella fastidiosa (strain 9a5c), this protein is 4-hydroxythreonine-4-phosphate dehydrogenase.